A 365-amino-acid polypeptide reads, in one-letter code: Histidinol-phosphate aminotransferase (365 aa).

K227 carries the N6-(pyridoxal phosphate)lysine modification.

This sequence belongs to the class-II pyridoxal-phosphate-dependent aminotransferase family. Histidinol-phosphate aminotransferase subfamily. In terms of assembly, homodimer. Pyridoxal 5'-phosphate serves as cofactor.

It catalyses the reaction L-histidinol phosphate + 2-oxoglutarate = 3-(imidazol-4-yl)-2-oxopropyl phosphate + L-glutamate. It functions in the pathway amino-acid biosynthesis; L-histidine biosynthesis; L-histidine from 5-phospho-alpha-D-ribose 1-diphosphate: step 7/9. This Campylobacter concisus (strain 13826) protein is Histidinol-phosphate aminotransferase.